The primary structure comprises 221 residues: Casparian strip membrane protein 3 (221 aa).

Basic and acidic residues predominate over residues methionine 1–glutamate 12. Positions methionine 1–glycine 27 are disordered. Residues methionine 1–glycine 58 are Cytoplasmic-facing. Residues valine 59–alanine 79 form a helical membrane-spanning segment. At lysine 80 to serine 109 the chain is on the extracellular side. The helical transmembrane segment at phenylalanine 110 to valine 130 threads the bilayer. Residues cysteine 131 to aspartate 148 are Cytoplasmic-facing. The chain crosses the membrane as a helical span at residues threonine 149–alanine 169. Residues histidine 170 to glycine 194 lie on the Extracellular side of the membrane. Asparagine 173 carries an N-linked (GlcNAc...) asparagine glycan. The chain crosses the membrane as a helical span at residues alanine 195–phenylalanine 215. Over alanine 216–threonine 221 the chain is Cytoplasmic.

This sequence belongs to the Casparian strip membrane proteins (CASP) family. As to quaternary structure, homodimer and heterodimers with other CASP proteins. Interacts with CASP1, CASP2, CASP4 and CASP5.

The protein localises to the cell membrane. Its function is as follows. Regulates membrane-cell wall junctions and localized cell wall deposition. Required for establishment of the Casparian strip membrane domain (CSD) and the subsequent formation of Casparian strips, a cell wall modification of the root endodermis that determines an apoplastic barrier between the intraorganismal apoplasm and the extraorganismal apoplasm and prevents lateral diffusion. This is Casparian strip membrane protein 3 (CASP3) from Arabidopsis thaliana (Mouse-ear cress).